A 610-amino-acid polypeptide reads, in one-letter code: All-trans-retinol 13,14-reductase (610 aa).

The first 18 residues, Met1–Cys18, serve as a signal peptide directing secretion.

It belongs to the carotenoid/retinoid oxidoreductase family. CrtISO subfamily. NAD(+) serves as cofactor. Requires NADP(+) as cofactor. It depends on FAD as a cofactor. Expressed in liver; expression positively correlates with obesity and liver steatosis. Expressed in adipose tissue; expression tends to be decreased in obese versus lean individuals.

Its subcellular location is the endoplasmic reticulum membrane. It carries out the reaction all-trans-13,14-dihydroretinol + A = all-trans-retinol + AH2. Catalyzes the saturation of all-trans-retinol to all-trans-13,14-dihydroretinol. Does not exhibit any activity toward all-trans-retinoic acid, nor 9-cis, 11-cis or 13-cis-retinol isomers. May play a role in the metabolism of vitamin A. Independently of retinol conversion, may regulate liver metabolism upstream of MLXIPL/ChREBP. May play a role in adipocyte differentiation. The protein is All-trans-retinol 13,14-reductase (RETSAT) of Homo sapiens (Human).